The sequence spans 244 residues: 1-(5-phosphoribosyl)-5-[(5-phosphoribosylamino)methylideneamino] imidazole-4-carboxamide isomerase (244 aa).

Aspartate 10 functions as the Proton acceptor in the catalytic mechanism. Aspartate 129 (proton donor) is an active-site residue.

Belongs to the HisA/HisF family.

It is found in the cytoplasm. The catalysed reaction is 1-(5-phospho-beta-D-ribosyl)-5-[(5-phospho-beta-D-ribosylamino)methylideneamino]imidazole-4-carboxamide = 5-[(5-phospho-1-deoxy-D-ribulos-1-ylimino)methylamino]-1-(5-phospho-beta-D-ribosyl)imidazole-4-carboxamide. It functions in the pathway amino-acid biosynthesis; L-histidine biosynthesis; L-histidine from 5-phospho-alpha-D-ribose 1-diphosphate: step 4/9. The chain is 1-(5-phosphoribosyl)-5-[(5-phosphoribosylamino)methylideneamino] imidazole-4-carboxamide isomerase from Rhodococcus jostii (strain RHA1).